The chain runs to 217 residues: ATP-dependent Clp protease proteolytic subunit 2 (217 aa).

Ser121 (nucleophile) is an active-site residue. The active site involves His146.

It belongs to the peptidase S14 family. Fourteen ClpP subunits assemble into 2 heptameric rings which stack back to back to give a disk-like structure with a central cavity, resembling the structure of eukaryotic proteasomes.

The protein localises to the cytoplasm. The enzyme catalyses Hydrolysis of proteins to small peptides in the presence of ATP and magnesium. alpha-casein is the usual test substrate. In the absence of ATP, only oligopeptides shorter than five residues are hydrolyzed (such as succinyl-Leu-Tyr-|-NHMec, and Leu-Tyr-Leu-|-Tyr-Trp, in which cleavage of the -Tyr-|-Leu- and -Tyr-|-Trp bonds also occurs).. Cleaves peptides in various proteins in a process that requires ATP hydrolysis. Has a chymotrypsin-like activity. Plays a major role in the degradation of misfolded proteins. In Paraburkholderia xenovorans (strain LB400), this protein is ATP-dependent Clp protease proteolytic subunit 2.